A 242-amino-acid polypeptide reads, in one-letter code: Large ribosomal subunit protein uL1 (242 aa).

The protein belongs to the universal ribosomal protein uL1 family. In terms of assembly, part of the 50S ribosomal subunit.

In terms of biological role, binds directly to 23S rRNA. The L1 stalk is quite mobile in the ribosome, and is involved in E site tRNA release. Functionally, protein L1 is also a translational repressor protein, it controls the translation of the L11 operon by binding to its mRNA. This Persephonella marina (strain DSM 14350 / EX-H1) protein is Large ribosomal subunit protein uL1.